Reading from the N-terminus, the 554-residue chain is MWLHALVWASLAVCPILGHSLLPPVVDTTQGKVLGKYISLEGFEQPVAVFLGVPFAKPPLGSLRFAPPQPAEPWSFVKNATSYPPMCSQDAGWAKILSDMFSTEKEILPLKISEDCLYLNIYSPADLTKSSQLPVMVWIHGGGLVIGGASPYNGLALSAHENVVVVTIQYRLGIWGLFSTGDEHSPGNWAHLDQLAALRWVQDNIANFGGNPDSVTIFGESSGGISVSVLVLSPLGKDLFHRAISESGVVINTNVGKKNIQAVNEIIATLSQCNDTSSAAMVQCLRQKTESELLEISGKLVQYNISLSTMIDGVVLPKAPEEILAEKSFNTVPYIVGFNKQEFGWIIPMMLQNLLPEGKMNEETASLLLRRFHSELNISESMIPAVIEQYLRGVDDPAKKSELILDMFGDIFFGIPAVLLSRSLRDAGVSTYMYEFRYRPSFVSDKRPQTVEGDHGDEIFFVFGAPLLKEGASEEETNLSKMVMKFWANFARNGNPNGEGLPHWPEYDEQEGYLQIGATTQQAQRLKAEEVAFWTELLAKNPPETDPTEHTEHK.

The signal sequence occupies residues 1-18 (MWLHALVWASLAVCPILG). Asn-79 is a glycosylation site (N-linked (GlcNAc...) asparagine). A disulfide bond links Cys-87 and Cys-116. The active-site Acyl-ester intermediate is Ser-221. Cysteines 273 and 284 form a disulfide. Residues Asn-274 and Asn-304 are each glycosylated (N-linked (GlcNAc...) asparagine). The Charge relay system role is filled by Glu-342. An N-linked (GlcNAc...) asparagine glycan is attached at Asn-377. The active-site Charge relay system is the His-455. Ser-473 bears the Phosphoserine mark. N-linked (GlcNAc...) asparagine glycosylation is present at Asn-478. The Prevents secretion from ER signature appears at 551-554 (TEHK).

It belongs to the type-B carboxylesterase/lipase family. Expressed in lung, kidney and liver.

The protein localises to the endoplasmic reticulum lumen. The catalysed reaction is a carboxylic ester + H2O = an alcohol + a carboxylate + H(+). In terms of biological role, involved in the detoxification of xenobiotics and in the activation of ester and amide prodrugs. Involved in the extracellular metabolism of lung surfactant. The chain is Carboxylesterase 1C (Ces1c) from Mus musculus (Mouse).